We begin with the raw amino-acid sequence, 357 residues long: MADKGSGGSRLPLALPPASQGCSSGGSGSSAGGSGNPRPPRNLQGLLQMAITAGSQEPDPPPEPMSEERRQWLQEAMSAAFRGQREEVEQMKNCLRVLSQATPAMAGEAELATDQQEREGALELLADLCENMDNAADFCQLSGMHLLVGRYLEAGAAGLRWRAAQLIGTCSQNVAAIQEQVLGLGALRKLLRLLDRDSCDTVRVKALFAISCLVREQEAGLLQFLRLDGFSVLMRAMQQQVQKLKVKSAFLLQNLLVGHPEHKGTLCSMGMVQQLVALVRTEHSPFHEHVLGALCSLVTDFPQGVRECREPELGLEELLRHRCQLLQQREEYQEELEFCEKLLQTCFSSPTDDSMDR.

Residues 1–68 are disordered; that stretch reads MADKGSGGSR…DPPPEPMSEE (68 aa). Positions 23–35 are enriched in gly residues; the sequence is SSGGSGSSAGGSG. ARM repeat units follow at residues 130 to 172, 175 to 215, 218 to 257, and 260 to 299; these read ENMD…TCSQ, AAIQ…CLVR, EAGL…NLLV, and PEHK…SLVT. A phosphoserine mark is found at S349 and S354.

In terms of assembly, interacts with the ATP-binding domain of HSPA1A. Detected in a ternary complex containing STUB1, HSPA1A and HSPBP1. Interacts with PGLYRP1; this interaction blocks the cytotoxic activity of the PGLYRP1-HSPA1A complex.

In terms of biological role, inhibits HSPA1A chaperone activity by changing the conformation of the ATP-binding domain of HSPA1A and interfering with ATP binding. Interferes with ubiquitination mediated by STUB1 and inhibits chaperone-assisted degradation of target proteins. This Mus musculus (Mouse) protein is Hsp70-binding protein 1 (Hspbp1).